The chain runs to 204 residues: Dephospho-CoA kinase (204 aa).

The DPCK domain occupies 4–201; the sequence is VIGLTGGIAS…EKYLAMCKKN (198 aa). Position 12-17 (12-17) interacts with ATP; sequence ASGKTT.

This sequence belongs to the CoaE family.

It localises to the cytoplasm. The enzyme catalyses 3'-dephospho-CoA + ATP = ADP + CoA + H(+). The protein operates within cofactor biosynthesis; coenzyme A biosynthesis; CoA from (R)-pantothenate: step 5/5. Its function is as follows. Catalyzes the phosphorylation of the 3'-hydroxyl group of dephosphocoenzyme A to form coenzyme A. The protein is Dephospho-CoA kinase of Vibrio parahaemolyticus serotype O3:K6 (strain RIMD 2210633).